Reading from the N-terminus, the 239-residue chain is Ribosomal RNA small subunit methyltransferase G (239 aa).

S-adenosyl-L-methionine-binding positions include Gly77, Phe82, 128–129, and Arg146; that span reads AE. The interval 215–239 is disordered; it reads DKRSQTPKKYPRKPGTPNKSPLLEK.

It belongs to the methyltransferase superfamily. RNA methyltransferase RsmG family.

Its subcellular location is the cytoplasm. In terms of biological role, specifically methylates the N7 position of guanine in position 535 of 16S rRNA. The chain is Ribosomal RNA small subunit methyltransferase G from Staphylococcus saprophyticus subsp. saprophyticus (strain ATCC 15305 / DSM 20229 / NCIMB 8711 / NCTC 7292 / S-41).